Here is a 219-residue protein sequence, read N- to C-terminus: Thiopurine S-methyltransferase (219 aa).

W10, L45, E66, and R123 together coordinate S-adenosyl-L-methionine.

This sequence belongs to the class I-like SAM-binding methyltransferase superfamily. TPMT family.

The protein resides in the cytoplasm. It carries out the reaction S-adenosyl-L-methionine + a thiopurine = S-adenosyl-L-homocysteine + a thiopurine S-methylether.. This is Thiopurine S-methyltransferase from Bordetella pertussis (strain Tohama I / ATCC BAA-589 / NCTC 13251).